A 232-amino-acid chain; its full sequence is Probable caffeoyl-CoA O-methyltransferase At4g26220 (232 aa).

Residue Lys7 coordinates substrate. S-adenosyl-L-methionine is bound by residues Thr49, Glu71, Gly73–Val74, Ser79, Asp97, and Ala126. Substrate is bound at residue Asp149. Asp149 contacts a divalent metal cation. Asp151 is a binding site for S-adenosyl-L-methionine. A divalent metal cation contacts are provided by Asp175 and Asn176.

It belongs to the class I-like SAM-binding methyltransferase superfamily. Cation-dependent O-methyltransferase family. CCoAMT subfamily. Requires a divalent metal cation as cofactor.

The enzyme catalyses (E)-caffeoyl-CoA + S-adenosyl-L-methionine = (E)-feruloyl-CoA + S-adenosyl-L-homocysteine + H(+). The protein operates within aromatic compound metabolism; phenylpropanoid biosynthesis. Methylates caffeoyl-CoA to feruloyl-CoA and 5-hydroxyferuloyl-CoA to sinapoyl-CoA. Plays a role in the synthesis of feruloylated polysaccharides. Involved in the reinforcement of the plant cell wall. Also involved in the responding to wounding or pathogen challenge by the increased formation of cell wall-bound ferulic acid polymers. The polypeptide is Probable caffeoyl-CoA O-methyltransferase At4g26220 (Arabidopsis thaliana (Mouse-ear cress)).